The chain runs to 230 residues: MGQKVHPVGIRLGIVKEHNSLWYAGPKSYSDCLVTDLQVREYLFKRLKSASVSRIKIERPSENVRITIATARPGIVIGKKGEDVERLRRDVAAKMGVPVHINIEEVRKPDLDARLVGDNVAGQLERRVMFRRAMKRAVQNAMKSGAEGIRIQLSGRLGGAEIARTEWYREGRVPLHTLRADIDYASVRAETTYGTIGVKVWIFRGEVLGGMEQVQEEQKQSKGAKKRGRG.

One can recognise a KH type-2 domain in the interval 39 to 107 (VREYLFKRLK…PVHINIEEVR (69 aa)).

The protein belongs to the universal ribosomal protein uS3 family. Part of the 30S ribosomal subunit. Forms a tight complex with proteins S10 and S14.

In terms of biological role, binds the lower part of the 30S subunit head. Binds mRNA in the 70S ribosome, positioning it for translation. The chain is Small ribosomal subunit protein uS3 from Alcanivorax borkumensis (strain ATCC 700651 / DSM 11573 / NCIMB 13689 / SK2).